Here is a 196-residue protein sequence, read N- to C-terminus: Thymidine kinase (196 aa).

17–24 (GPMFAGKT) lines the ATP pocket. E92 functions as the Proton acceptor in the catalytic mechanism. F121 contacts substrate. Residues C146 and C149 each coordinate Zn(2+). Residue 166–170 (LILAG) coordinates substrate. Zn(2+) is bound by residues C179 and C182.

The protein belongs to the thymidine kinase family.

It carries out the reaction thymidine + ATP = dTMP + ADP + H(+). Phosphorylates thymidine. ASFV replicates in the cytoplasm of infected cells and contains genes encoding a number of enzymes needed for DNA synthesis, including thymidine kinase. Important for growth in swine macrophages in vitro and is a virus virulence factor in swine. In Ornithodoros (relapsing fever ticks), this protein is Thymidine kinase.